The sequence spans 165 residues: ATP synthase subunit b (165 aa).

Residues 10 to 30 (LIFWMLLSFGIVFAVLAKYGF) form a helical membrane-spanning segment.

The protein belongs to the ATPase B chain family. F-type ATPases have 2 components, F(1) - the catalytic core - and F(0) - the membrane proton channel. F(1) has five subunits: alpha(3), beta(3), gamma(1), delta(1), epsilon(1). F(0) has three main subunits: a(1), b(2) and c(10-14). The alpha and beta chains form an alternating ring which encloses part of the gamma chain. F(1) is attached to F(0) by a central stalk formed by the gamma and epsilon chains, while a peripheral stalk is formed by the delta and b chains.

It is found in the cell inner membrane. F(1)F(0) ATP synthase produces ATP from ADP in the presence of a proton or sodium gradient. F-type ATPases consist of two structural domains, F(1) containing the extramembraneous catalytic core and F(0) containing the membrane proton channel, linked together by a central stalk and a peripheral stalk. During catalysis, ATP synthesis in the catalytic domain of F(1) is coupled via a rotary mechanism of the central stalk subunits to proton translocation. Its function is as follows. Component of the F(0) channel, it forms part of the peripheral stalk, linking F(1) to F(0). The chain is ATP synthase subunit b from Bacteroides fragilis (strain ATCC 25285 / DSM 2151 / CCUG 4856 / JCM 11019 / LMG 10263 / NCTC 9343 / Onslow / VPI 2553 / EN-2).